A 112-amino-acid polypeptide reads, in one-letter code: Integration host factor subunit alpha (112 aa).

The protein belongs to the bacterial histone-like protein family. As to quaternary structure, heterodimer of an alpha and a beta chain.

This protein is one of the two subunits of integration host factor, a specific DNA-binding protein that functions in genetic recombination as well as in transcriptional and translational control. The chain is Integration host factor subunit alpha from Sinorhizobium fredii (strain NBRC 101917 / NGR234).